We begin with the raw amino-acid sequence, 143 residues long: Nucleoside diphosphate kinase (143 aa).

Residues lysine 11, phenylalanine 59, arginine 87, threonine 93, arginine 104, and asparagine 114 each coordinate ATP. Histidine 117 serves as the catalytic Pros-phosphohistidine intermediate.

This sequence belongs to the NDK family. In terms of assembly, homotetramer. Mg(2+) is required as a cofactor.

Its subcellular location is the cytoplasm. The catalysed reaction is a 2'-deoxyribonucleoside 5'-diphosphate + ATP = a 2'-deoxyribonucleoside 5'-triphosphate + ADP. It catalyses the reaction a ribonucleoside 5'-diphosphate + ATP = a ribonucleoside 5'-triphosphate + ADP. Its function is as follows. Major role in the synthesis of nucleoside triphosphates other than ATP. The ATP gamma phosphate is transferred to the NDP beta phosphate via a ping-pong mechanism, using a phosphorylated active-site intermediate. The chain is Nucleoside diphosphate kinase from Shewanella sp. (strain ANA-3).